Consider the following 346-residue polypeptide: Peripherin-2 (346 aa).

Residues 1-24 are Cytoplasmic-facing; sequence MALLKVKFDQKKRVKLAQGLWLMN. A helical transmembrane segment spans residues 25–43; it reads WLSVLAGIVLFSLGLFLKI. Topologically, residues 44 to 61 are lumenal; that stretch reads ELRKRSEVMNNSESHFVP. Residue Asn-53 is glycosylated (N-linked (GlcNAc...) asparagine). The chain crosses the membrane as a helical span at residues 62–80; sequence NSLIGVGVLSCVFNSLAGK. The Cytoplasmic portion of the chain corresponds to 81 to 99; that stretch reads ICYDALDPAKYAKWKPWLK. A helical transmembrane segment spans residues 100 to 123; that stretch reads PYLAVCIFFNVILFLVALCCFLLR. At 124 to 264 the chain is on the lumenal side; the sequence is GSLESTLAYG…LNYYSSLMNS (141 aa). N-linked (GlcNAc...) asparagine glycosylation is present at Asn-229. A helical transmembrane segment spans residues 265-290; the sequence is MGVVTLLVWLFEVSITAGLRYLHTAL. Topologically, residues 291–346 are cytoplasmic; sequence ESVSNPEDPECESEGWLLEKSVPETWKAFLESFKKLGKSNQVEAEGADAGPAPEAG. Positions 341 to 346 are interaction with MREG; that stretch reads PAPEAG.

Belongs to the PRPH2/ROM1 family. As to quaternary structure, homodimer; disulfide-linked. Forms a homotetramer. Forms a heterotetramer with ROM1. Homotetramer and heterotetramer core complexes go on to form higher order complexes by formation of intermolecular disulfide bonds. Interacts with MREG. Interacts with STX3 isoform 3B. Interacts with SNAP25. Expressed in the retina (at protein level).

It localises to the membrane. The protein resides in the cell projection. It is found in the cilium. The protein localises to the photoreceptor outer segment. Its subcellular location is the photoreceptor inner segment. Essential for retina photoreceptor outer segment disk morphogenesis, may also play a role with ROM1 in the maintenance of outer segment disk structure. Required for the maintenance of retinal outer nuclear layer thickness. Required for the correct development and organization of the photoreceptor inner segment. This is Peripherin-2 (Prph2) from Mus musculus (Mouse).